The sequence spans 82 residues: Delta-actitoxin-Aeq2b 2 (82 aa).

An N-terminal signal peptide occupies residues 1 to 19 (MNRLMILVFAAVFLALASA). A propeptide spanning residues 20-26 (DEDVDIA) is cleaved from the precursor. 3 cysteine pairs are disulfide-bonded: Cys32–Cys79, Cys34–Cys69, and Cys62–Cys80.

It belongs to the sea anemone sodium channel inhibitory toxin family. Type I subfamily.

Its subcellular location is the secreted. The protein resides in the nematocyst. Its function is as follows. Binds specifically to voltage-gated sodium channels (Nav), thereby delaying their inactivation during signal transduction. Causes death to crabs. The chain is Delta-actitoxin-Aeq2b 2 from Actinia equina (Beadlet anemone).